An 867-amino-acid chain; its full sequence is 2-methylcitrate dehydratase (2-methyl-trans-aconitate forming) (867 aa).

[4Fe-4S] cluster is bound by residues Cys410, Cys476, and Cys479.

It belongs to the aconitase/IPM isomerase family. The cofactor is [4Fe-4S] cluster.

The catalysed reaction is (2S,3S)-2-methylcitrate = 2-methyl-trans-aconitate + H2O. It catalyses the reaction citrate = D-threo-isocitrate. It participates in organic acid metabolism; propanoate degradation. Inhibited by ferricyanide and EDTA. In terms of biological role, involved in the catabolism of short chain fatty acids (SCFA) via the 2-methylcitrate cycle II (propionate degradation route). In vivo under anaerobic conditions, AcnD catalyzes the stereospecific dehydration of (2S,3S)-methylcitrate (2-MC) to yield the trans isomer of 2-methyl-aconitate (2-MCA). AcnD can also accept citrate and cis-aconitate, but with a lower efficiency. 2-methylisocitrate and isocitrate are not substrates. This is 2-methylcitrate dehydratase (2-methyl-trans-aconitate forming) (acnD) from Shewanella oneidensis (strain ATCC 700550 / JCM 31522 / CIP 106686 / LMG 19005 / NCIMB 14063 / MR-1).